A 418-amino-acid polypeptide reads, in one-letter code: MSGTAGFITVSPGPPTEAPGGFPREPRGHRVRFISFKPYKFYWGFPNMSYITLTLPFNVGGGEAGDLFSTAWLFKTATHRMLSLAKQTPILPATDIGWKNTFRKAIYEVIPNRRYVDGVITLVRGIYESCRQLGVGFKEVELGDWLMFQQAEKEYPVRNITLKDDYSFYITTIGYNGEKDRIVVKPTIPKNYKVLLDKILEERQKHTARIVIKDYGVRKNRLWVHGEIQLTIPIDFYYKHMTRYRRNYGKLYGGVDVNVDRANLAVVDRYGRLRHVKTFWFEEASRKGCRSRRARSIIGMTVHDMLKYAYHHGVKTLFLENPDVLGKLKLLWIRNGKRLHRNYNWRVSVFRSRIIEMITMKTPLYAIRVEYVDPRRTTHSEEHDKIMKRYGLDRHSTSAYLIALRGIERYSPIQKVTA.

Positions 1-24 (MSGTAGFITVSPGPPTEAPGGFPR) are disordered.

It to A.pernix APE_1276 and S.solfataricus SSO2105.

This is an uncharacterized protein from Aeropyrum pernix (strain ATCC 700893 / DSM 11879 / JCM 9820 / NBRC 100138 / K1).